A 178-amino-acid polypeptide reads, in one-letter code: uncharacterized protein (178 aa).

Residues 1–19 (MKKLLIVTMLFTLALSAQA) form the signal peptide.

This sequence belongs to the opacity porin family.

This is an uncharacterized protein from Haemophilus influenzae (strain ATCC 51907 / DSM 11121 / KW20 / Rd).